The chain runs to 239 residues: 4-hydroxy-tetrahydrodipicolinate reductase (239 aa).

NAD(+)-binding positions include 12–17 (GASGRM), 94–96 (GTT), and 118–121 (ASNF). The Proton donor/acceptor role is filled by histidine 150. Histidine 151 contributes to the (S)-2,3,4,5-tetrahydrodipicolinate binding site. Lysine 154 serves as the catalytic Proton donor. Position 160 to 161 (160 to 161 (GT)) interacts with (S)-2,3,4,5-tetrahydrodipicolinate.

It belongs to the DapB family.

The protein resides in the cytoplasm. It catalyses the reaction (S)-2,3,4,5-tetrahydrodipicolinate + NAD(+) + H2O = (2S,4S)-4-hydroxy-2,3,4,5-tetrahydrodipicolinate + NADH + H(+). The catalysed reaction is (S)-2,3,4,5-tetrahydrodipicolinate + NADP(+) + H2O = (2S,4S)-4-hydroxy-2,3,4,5-tetrahydrodipicolinate + NADPH + H(+). It participates in amino-acid biosynthesis; L-lysine biosynthesis via DAP pathway; (S)-tetrahydrodipicolinate from L-aspartate: step 4/4. Its function is as follows. Catalyzes the conversion of 4-hydroxy-tetrahydrodipicolinate (HTPA) to tetrahydrodipicolinate. This Stenotrophomonas maltophilia (strain R551-3) protein is 4-hydroxy-tetrahydrodipicolinate reductase.